Here is a 224-residue protein sequence, read N- to C-terminus: UPF0111 protein TC_0063 (224 aa).

This sequence belongs to the UPF0111 family.

This Chlamydia muridarum (strain MoPn / Nigg) protein is UPF0111 protein TC_0063.